We begin with the raw amino-acid sequence, 100 residues long: Small ribosomal subunit protein uS17 (100 aa).

It belongs to the universal ribosomal protein uS17 family. As to quaternary structure, part of the 30S ribosomal subunit.

One of the primary rRNA binding proteins, it binds specifically to the 5'-end of 16S ribosomal RNA. This is Small ribosomal subunit protein uS17 from Erythrobacter litoralis (strain HTCC2594).